A 197-amino-acid chain; its full sequence is MSVCLAITKGIAVSSIGLYSGLLASASLITSTTPLEVLTGSLTPTLTTLKNAATALGAFASTFFCVSFFGAPPSLRHPYLLYGMLAAPLSSFVLGCASNYQSRKYSKVSKESSLFPEDSKPAASELSDSIIDLGEDNHASENTPRDGKPAATTVSKPAEALHTGPPIHTKNLIAATAIAIVGFVQAVIGVYGEGQFI.

3 consecutive transmembrane segments (helical) span residues 10–30 (GIAV…SLIT), 52–72 (AATA…FGAP), and 78–98 (PYLL…GCAS). Residues S127 and S129 each carry the phosphoserine modification. Residues 135–148 (EDNHASENTPRDGK) show a composition bias toward basic and acidic residues. Residues 135–154 (EDNHASENTPRDGKPAATTV) form a disordered region. A helical membrane pass occupies residues 172 to 192 (LIAATAIAIVGFVQAVIGVYG).

It belongs to the ATG33 family.

The protein resides in the mitochondrion membrane. Involved in the selective degradation of mitochondria via autophagy during starvation and at post-log phase. The chain is Autophagy-related protein 33 (ATG33) from Saccharomyces cerevisiae (strain RM11-1a) (Baker's yeast).